The sequence spans 492 residues: Polyamine oxidase 5 (492 aa).

FAD contacts are provided by glutamate 55, arginine 63, valine 244, and glutamate 431. The Microbody targeting signal motif lies at 490 to 492 (SRL).

Belongs to the flavin monoamine oxidase family. Requires FAD as cofactor. In terms of tissue distribution, widely expressed.

The protein resides in the peroxisome. It carries out the reaction spermine + O2 + H2O = 3-aminopropanal + spermidine + H2O2. The enzyme catalyses norspermine + O2 + H2O = norspermidine + 3-aminopropanal + H2O2. It catalyses the reaction thermospermine + O2 + H2O = 3-aminopropanal + spermidine + H2O2. Its pathway is amine and polyamine degradation; spermine degradation. Flavoenzyme involved in polyamine back-conversion. Catalyzes the oxidation of the secondary amino group of polyamines, such as spermine. Substrate preference is spermine &gt; thermospermine &gt; norspermine. No activity detected when putrescine, spermidine or N(1)-acetylspermidine are used as substrates. Plays an important role in the regulation of polyamine intracellular concentration. May play a role in producing hydrogen peroxide during seed germination. The protein is Polyamine oxidase 5 of Oryza sativa subsp. japonica (Rice).